Here is a 159-residue protein sequence, read N- to C-terminus: Transcription antitermination protein NusB (159 aa).

Belongs to the NusB family.

Involved in transcription antitermination. Required for transcription of ribosomal RNA (rRNA) genes. Binds specifically to the boxA antiterminator sequence of the ribosomal RNA (rrn) operons. This is Transcription antitermination protein NusB from Xanthomonas axonopodis pv. citri (strain 306).